The sequence spans 344 residues: Methionine import ATP-binding protein MetN (344 aa).

One can recognise an ABC transporter domain in the interval 2–241; it reads IEINQVNKVF…PKTELAHDFI (240 aa). 38–45 is an ATP binding site; sequence GSSGAGKS.

Belongs to the ABC transporter superfamily. Methionine importer (TC 3.A.1.24) family. The complex is composed of two ATP-binding proteins (MetN), two transmembrane proteins (MetI) and a solute-binding protein (MetQ).

Its subcellular location is the cell inner membrane. The enzyme catalyses L-methionine(out) + ATP + H2O = L-methionine(in) + ADP + phosphate + H(+). It catalyses the reaction D-methionine(out) + ATP + H2O = D-methionine(in) + ADP + phosphate + H(+). Part of the ABC transporter complex MetNIQ involved in methionine import. Responsible for energy coupling to the transport system. This is Methionine import ATP-binding protein MetN from Vibrio vulnificus (strain CMCP6).